A 90-amino-acid chain; its full sequence is Small ribosomal subunit protein bS20 (90 aa).

Positions 1-21 are disordered; the sequence is MANHKSALKRVRQTKKRTERN.

The protein belongs to the bacterial ribosomal protein bS20 family.

Its function is as follows. Binds directly to 16S ribosomal RNA. The sequence is that of Small ribosomal subunit protein bS20 from Nitratiruptor sp. (strain SB155-2).